The sequence spans 413 residues: Histidinol-phosphate aminotransferase, chloroplastic (413 aa).

Residues 1–35 (MGVIELCNTSSICIGRAKPSCCSIERNQRRRIICM) constitute a chloroplast transit peptide. An N6-(pyridoxal phosphate)lysine modification is found at K273.

This sequence belongs to the class-II pyridoxal-phosphate-dependent aminotransferase family. Histidinol-phosphate aminotransferase subfamily. As to quaternary structure, homodimer. The cofactor is pyridoxal 5'-phosphate. Mainly expressed in green tissues.

It localises to the plastid. The protein resides in the chloroplast. The enzyme catalyses L-histidinol phosphate + 2-oxoglutarate = 3-(imidazol-4-yl)-2-oxopropyl phosphate + L-glutamate. Its pathway is amino-acid biosynthesis; L-histidine biosynthesis; L-histidine from 5-phospho-alpha-D-ribose 1-diphosphate: step 7/9. This is Histidinol-phosphate aminotransferase, chloroplastic (HPA) from Nicotiana tabacum (Common tobacco).